Here is a 424-residue protein sequence, read N- to C-terminus: Double-stranded RNA-binding protein 8 (424 aa).

The segment covering 1 to 10 (MDMPPTPLPP) has biased composition (pro residues). The interval 1 to 22 (MDMPPTPLPPETANTSPAPNGA) is disordered. DRBM domains follow at residues 33-102 (VFKS…EIVK) and 118-185 (LCKN…AIQG). Composition is skewed to basic and acidic residues over residues 287-308 (KRVE…ENQH) and 318-328 (DEARVEQEPSR). The disordered stretch occupies residues 287-330 (KRVEAEPPRDIEMVQPDKENQHSDAALVQPDDEARVEQEPSRDI).

In terms of biological role, binds double-stranded RNA. The sequence is that of Double-stranded RNA-binding protein 8 (DRB8) from Oryza sativa subsp. japonica (Rice).